Reading from the N-terminus, the 104-residue chain is Type VII secretion system extracellular protein B (104 aa).

Belongs to the WXG100 family. As to quaternary structure, homodimer. When mixed with EsxA does not form heterodimers.

The protein localises to the secreted. Its function is as follows. Virulence factor that is important for the establishment of infection in the host. EsxB is required for EsxA synthesis as well as secretion. Mediates together with EsxA the release of S.aureus from the host cell. Also inhibits host cytokine production and thus modulates dendritic cell-mediated immunity. This chain is Type VII secretion system extracellular protein B, found in Staphylococcus aureus (strain MSSA476).